The sequence spans 725 residues: Aminopeptidase RNPEPL1 (725 aa).

326–330 contacts substrate; it reads VAMEN. His-353 lines the Zn(2+) pocket. The active-site Proton acceptor is Glu-354. Zn(2+) is bound by residues His-357 and Glu-376. The interval 676–699 is disordered; it reads GLGSSTEPASEPSTELGKAEADTD. The span at 679-690 shows a compositional bias: low complexity; the sequence is SSTEPASEPSTE.

Belongs to the peptidase M1 family. The cofactor is Zn(2+). In terms of tissue distribution, ubiquitously expressed. Expressed at relatively higher levels in heart and skeletal muscle.

It catalyses the reaction Release of N-terminal amino acids, preferentially methionine, from peptides and arylamides.. Inhibited by calcium but not affected by chloride ions. Inhibited by amastatin and to a lower extent by bestatin. Weakly inhibited by puromycin. Functionally, broad specificity aminopeptidase which preferentially hydrolyzes an N-terminal methionine, citrulline or glutamine. The sequence is that of Aminopeptidase RNPEPL1 from Homo sapiens (Human).